A 731-amino-acid polypeptide reads, in one-letter code: Putative beta-galactosidase (731 aa).

The first 29 residues, 1-29, serve as a signal peptide directing secretion; it reads MLCGKENNVMKMMLVYVFVLITLISCVYG. Glu-187 (proton donor) is an active-site residue. Glu-257 acts as the Nucleophile in catalysis.

It belongs to the glycosyl hydrolase 35 family. Senescing flower petals.

It catalyses the reaction Hydrolysis of terminal non-reducing beta-D-galactose residues in beta-D-galactosides.. The chain is Putative beta-galactosidase (CARSR12) from Dianthus caryophyllus (Carnation).